Consider the following 719-residue polypeptide: MPAKRSRTFRQSGSALLALLAIILLMNISCTSAARDHRRQTNLEAKVGSHVVFNCYIDFPFDAPIPYLVHWTKDNKKIFTWYEQETSTSELFNGRLHLVENHPEFGRASVNLTAIRESDQGWYHCQVSFPNRSPSVRNNGTAYHLAVQGGSLIRIPPVNQTIREGQTAFFHCVMKHPENSQASWYKDGVLLQEVQDLVRRFYMGPDGSLSIDPTMMSDLGEYECKVRNSDGELQTAKAFLNIQYKAKVIYAPPEVFLPYGQPAVLDCHFRANPPLKNLRWEKDGLLFDSYNVPGVFYKMNGSLFFAKVDENHAGSYTCTPYNDLGTDGPSPVISVIVLRPPIFSVTPKAIYIQKLGEAAELPCEAIDRDGNNRPSIIWGRKDGQPLPADRFSLSGGNLTITGLVEGDRGIYECSATNEAATITAEAELMIENIAPRAPYNLTANSTETCITIRWQPGYLRPNLEYTVWYRLMEAPEWRTLRVLDKKVMEATVQHLQPGKEYEFMVLSQDKYGDGMFSKQFRFQTLPSPIRADDFDAQQLQHDLGQVTAPAGGLGAPWNLTAISNQQGWLLHWEHPVQGLEGLRLYAVRWWKEPEHFLIGHAETFDNYYQLRHLKEDTLFKVQVLAVGTETQQSVPSHELLIDVPSQRKVRALIIGSSVGVIFLLCALCAFLYVKRSCLRHLFAKDSSASEDEDTAESGDCDSDEQDQRDRDSIKIRQST.

The N-terminal stretch at 1-33 (MPAKRSRTFRQSGSALLALLAIILLMNISCTSA) is a signal peptide. Residues 34–650 (ARDHRRQTNL…IDVPSQRKVR (617 aa)) are Extracellular-facing. Ig-like domains follow at residues 40–128 (QTNL…CQVS), 134–241 (PSVR…AFLN), 246–334 (AKVI…PVIS), and 341–429 (PIFS…AELM). Disulfide bonds link C55–C125, C172–C224, C267–C318, and C363–C413. Fibronectin type-III domains lie at 434 to 527 (APRA…TLPS) and 555 to 646 (APWN…VPSQ). The chain crosses the membrane as a helical span at residues 651–671 (ALIIGSSVGVIFLLCALCAFL). Residues 672-719 (YVKRSCLRHLFAKDSSASEDEDTAESGDCDSDEQDQRDRDSIKIRQST) lie on the Cytoplasmic side of the membrane. Positions 685 to 719 (DSSASEDEDTAESGDCDSDEQDQRDRDSIKIRQST) are disordered. Residues 688-704 (ASEDEDTAESGDCDSDE) are compositionally biased toward acidic residues. Residues 705 to 719 (QDQRDRDSIKIRQST) are compositionally biased toward basic and acidic residues.

It belongs to the immunoglobulin superfamily. Interacts with tutl. In the visual system, expressed in lamina and medulla (at protein level).

Its subcellular location is the cell membrane. The protein localises to the cell projection. It localises to the axon. Its function is as follows. In the developing eye, has a role in axonal targeting of the R7 photoreceptor where it functions together with tutl. Probably mediates homotypic cell adhesion; the effect is inhibited by Lar. The chain is Protein borderless from Drosophila melanogaster (Fruit fly).